The following is a 149-amino-acid chain: Nucleoside deoxyribosyltransferase (149 aa).

Glu90 serves as the catalytic Nucleophile.

The protein belongs to the nucleoside deoxyribosyltransferase family.

It catalyses the reaction 2-deoxy-D-ribosyl-base(1) + base(2) = 2-deoxy-D-ribosyl-base(2) + base(1).. It participates in nucleotide metabolism; nucleotide salvage pathway. In terms of biological role, catalyzes the cleavage of the glycosidic bond of 2'-deoxyribonucleosides and the transfer of the deoxyribosyl moiety to an acceptor purine or pyrimidine base. The protein is Nucleoside deoxyribosyltransferase (ntd) of Lactobacillus johnsonii (strain CNCM I-12250 / La1 / NCC 533).